Consider the following 162-residue polypeptide: uncharacterized protein (162 aa).

Helical transmembrane passes span 28 to 50, 57 to 76, and 108 to 130; these read ALALALLPRSSLLWYLLFAVCFF, LLLLSLVLFGFVVPSFDPWL, and YNTMIAGGLVAGALCYLPCYALA.

Its subcellular location is the cell membrane. This is an uncharacterized protein from Treponema pallidum (strain Nichols).